Consider the following 248-residue polypeptide: Putative TrmH family tRNA/rRNA methyltransferase (248 aa).

Residues G196, I216, and L225 each contribute to the S-adenosyl-L-methionine site.

It belongs to the class IV-like SAM-binding methyltransferase superfamily. RNA methyltransferase TrmH family.

This chain is Putative TrmH family tRNA/rRNA methyltransferase, found in Staphylococcus aureus (strain COL).